An 89-amino-acid chain; its full sequence is Small ribosomal subunit protein uS15 (89 aa).

This sequence belongs to the universal ribosomal protein uS15 family. In terms of assembly, part of the 30S ribosomal subunit. Forms a bridge to the 50S subunit in the 70S ribosome, contacting the 23S rRNA.

In terms of biological role, one of the primary rRNA binding proteins, it binds directly to 16S rRNA where it helps nucleate assembly of the platform of the 30S subunit by binding and bridging several RNA helices of the 16S rRNA. Forms an intersubunit bridge (bridge B4) with the 23S rRNA of the 50S subunit in the ribosome. The protein is Small ribosomal subunit protein uS15 of Rhizobium etli (strain CIAT 652).